Consider the following 173-residue polypeptide: Monothiol glutaredoxin-S14, chloroplastic (173 aa).

The N-terminal 63 residues, 1–63, are a transit peptide targeting the chloroplast; that stretch reads MALRSVKTPT…KLKPTKFRCS (63 aa). In terms of domain architecture, Glutaredoxin spans 72-173; sequence KDTLEKLVNS…QEEVEKAMCS (102 aa). Residue Lys-89 participates in glutathione binding. [2Fe-2S] cluster-binding residues include Cys-97 and Phe-99. At Cys-97 the chain carries S-glutathionyl cysteine. The tract at residues 97–100 is required for CAX1 activation; sequence CGFS. 2 residues coordinate glutathione: Arg-126 and Lys-130. Positions 133 to 137 are required for CAX1 activation; sequence SNWPT. Glutathione is bound by residues Phe-138 and 151 to 152; that span reads CD.

It belongs to the glutaredoxin family. CGFS subfamily. [2Fe-2S]-bridged holo-homodimer. Interacts with N-terminal part of CAX1 in yeast. Interacts in vitro with SUFE1, BOLA1, BOLA2 and BOLA4. Interacts in vivo only with SUFE1, BOLA1 and BOLA4. Interacts with SBP1. Highly expressed in leaves, at intermediate levels in stems and at lower levels in roots and flowers.

The protein localises to the plastid. The protein resides in the chloroplast. Its function is as follows. May only reduce GSH-thiol disulfides, but not protein disulfides (Potential). Probably involved in the regulation of the redox state of the BOLA proteins (Potential). May act as Fe-S cluster donors to Fe-S cluster-requiring proteins. May protect cells against protein oxidative damage. May regulate CAX cation transporters. The GRXS14-BOLA1 heterodimer binds a labile, oxygen sensitive Fe-S cluster. The polypeptide is Monothiol glutaredoxin-S14, chloroplastic (Arabidopsis thaliana (Mouse-ear cress)).